Consider the following 263-residue polypeptide: Sulfur carrier protein FdhD (263 aa).

Cys-107 acts as the Cysteine persulfide intermediate in catalysis.

This sequence belongs to the FdhD family.

Its subcellular location is the cytoplasm. Its function is as follows. Required for formate dehydrogenase (FDH) activity. Acts as a sulfur carrier protein that transfers sulfur from IscS to the molybdenum cofactor prior to its insertion into FDH. The polypeptide is Sulfur carrier protein FdhD (Bacillus licheniformis (strain ATCC 14580 / DSM 13 / JCM 2505 / CCUG 7422 / NBRC 12200 / NCIMB 9375 / NCTC 10341 / NRRL NRS-1264 / Gibson 46)).